The chain runs to 629 residues: tRNA uridine 5-carboxymethylaminomethyl modification enzyme MnmG (629 aa).

FAD is bound by residues 13–18, Val125, and Ser180; that span reads GGGHAG. Residue 273-287 participates in NAD(+) binding; it reads GPRYCPSIEDKVMRF. Gln370 serves as a coordination point for FAD.

This sequence belongs to the MnmG family. As to quaternary structure, homodimer. Heterotetramer of two MnmE and two MnmG subunits. FAD is required as a cofactor.

The protein resides in the cytoplasm. Its function is as follows. NAD-binding protein involved in the addition of a carboxymethylaminomethyl (cmnm) group at the wobble position (U34) of certain tRNAs, forming tRNA-cmnm(5)s(2)U34. The sequence is that of tRNA uridine 5-carboxymethylaminomethyl modification enzyme MnmG from Salmonella agona (strain SL483).